The following is a 529-amino-acid chain: Bifunctional purine biosynthesis protein PurH (529 aa).

In terms of domain architecture, MGS-like spans 1–148 (MQQRRPIRRA…KNHKDVAIVV (148 aa)).

It belongs to the PurH family.

It catalyses the reaction (6R)-10-formyltetrahydrofolate + 5-amino-1-(5-phospho-beta-D-ribosyl)imidazole-4-carboxamide = 5-formamido-1-(5-phospho-D-ribosyl)imidazole-4-carboxamide + (6S)-5,6,7,8-tetrahydrofolate. The enzyme catalyses IMP + H2O = 5-formamido-1-(5-phospho-D-ribosyl)imidazole-4-carboxamide. It functions in the pathway purine metabolism; IMP biosynthesis via de novo pathway; 5-formamido-1-(5-phospho-D-ribosyl)imidazole-4-carboxamide from 5-amino-1-(5-phospho-D-ribosyl)imidazole-4-carboxamide (10-formyl THF route): step 1/1. It participates in purine metabolism; IMP biosynthesis via de novo pathway; IMP from 5-formamido-1-(5-phospho-D-ribosyl)imidazole-4-carboxamide: step 1/1. In Pectobacterium atrosepticum (strain SCRI 1043 / ATCC BAA-672) (Erwinia carotovora subsp. atroseptica), this protein is Bifunctional purine biosynthesis protein PurH.